Reading from the N-terminus, the 109-residue chain is DNA-binding protein Mpal_0536 (109 aa).

The interval 14 to 35 (MAQLQSQQMDQQQMDEEKQRAK) is disordered. Positions 16-25 (QLQSQQMDQQ) are enriched in low complexity.

Belongs to the PDCD5 family.

This Methanosphaerula palustris (strain ATCC BAA-1556 / DSM 19958 / E1-9c) protein is DNA-binding protein Mpal_0536.